We begin with the raw amino-acid sequence, 1110 residues long: Retinal guanylyl cyclase 1 (1110 aa).

Positions 1-56 (MTACTFLAGGLRDPGLCGPTRWAPSPPGLPPIPPRPRLRLRPPLLLLLLLPRSVLS) are cleaved as a signal peptide. Topologically, residues 57–467 (AVFTVGVLGP…PDTICNGGVE (411 aa)) are extracellular. N-linked (GlcNAc...) asparagine glycosylation occurs at N302. Residues 468–492 (PSVVFIGFLLVVGMGLAGAFLAHYC) traverse the membrane as a helical segment. The 321-residue stretch at 493–813 (RHRLLHIQMV…DRTFELFKSI (321 aa)) folds into the Protein kinase domain. Residues 493–1110 (RHRLLHIQMV…KARPGQFSGK (618 aa)) are Cytoplasmic-facing. A Guanylate cyclase domain is found at 885 to 1015 (TLYFSDIVGF…DTVNTASAME (131 aa)). A disordered region spans residues 1070 to 1110 (PIPKPPDLQPGASNHGISLHEIPPDRRQKLEKARPGQFSGK). The span at 1091–1103 (IPPDRRQKLEKAR) shows a compositional bias: basic and acidic residues.

The protein belongs to the adenylyl cyclase class-4/guanylyl cyclase family. In terms of assembly, homodimer; requires homodimerization for guanylyl cyclase activity. Interacts (via C-terminus) with RD3 (via C-terminus); promotes the exit of GUCY2D from the endoplasmic reticulum and its trafficking to the photoreceptor outer segments. Interaction with RD3 negatively regulates GUCY2D guanylate cyclase activity. Expressed in the retina in rod outer segment.

The protein localises to the photoreceptor outer segment membrane. Its subcellular location is the endoplasmic reticulum membrane. It catalyses the reaction GTP = 3',5'-cyclic GMP + diphosphate. Activated by GUCA1A when free calcium ions concentration is low, and inhibited by GUCA1A when free calcium ions concentration is high. Negatively regulated by RD3; inhibits the basal and GUCA1A-stimulated guanylate cyclase activity. Functionally, catalyzes the synthesis of cyclic GMP (cGMP) in rods and cones of photoreceptors. Plays an essential role in phototransduction, by mediating cGMP replenishment. May also participate in the trafficking of membrane-asociated proteins to the photoreceptor outer segment membrane. The protein is Retinal guanylyl cyclase 1 (GUCY2D) of Bos taurus (Bovine).